A 371-amino-acid polypeptide reads, in one-letter code: Deoxyguanosinetriphosphate triphosphohydrolase-like protein (371 aa).

The 139-residue stretch at R62–N200 folds into the HD domain.

The protein belongs to the dGTPase family. Type 2 subfamily.

The sequence is that of Deoxyguanosinetriphosphate triphosphohydrolase-like protein from Pelagibacter ubique (strain HTCC1062).